A 298-amino-acid polypeptide reads, in one-letter code: MTDAPVISPLDQARILSEALPHMQRYDEETIVIKYGGHAMGAEDTAKAFARDIVLLEQTAVNPVVVHGGGPQIAQMLKRLGIKSEFAAGLRITDAATIEIVEMVLAGSINKQLVGYINEAGGKAVGLCGKDGNMVSASKATRTMVDPDSRIEEVIDLGFVGEPEKVDLTLLNQLIGHELIPVLAPLATSASGQTFNVNADTFAGAVAGALRAKRLLLLTDVPGVLDQNKKLIPELSIKDARKLIADGTISGGMIPKVETCIYALEQGVEGVVILDGKVPHAVLLELFTNQGTGTLIHK.

Substrate is bound by residues glycine 69–glycine 70, arginine 91, and asparagine 196.

Belongs to the acetylglutamate kinase family. ArgB subfamily.

The protein localises to the cytoplasm. It catalyses the reaction N-acetyl-L-glutamate + ATP = N-acetyl-L-glutamyl 5-phosphate + ADP. Its pathway is amino-acid biosynthesis; L-arginine biosynthesis; N(2)-acetyl-L-ornithine from L-glutamate: step 2/4. Catalyzes the ATP-dependent phosphorylation of N-acetyl-L-glutamate. The protein is Acetylglutamate kinase of Rhodopseudomonas palustris (strain ATCC BAA-98 / CGA009).